A 362-amino-acid chain; its full sequence is MAHAAAATGALAPLHPLLRCTSRHLCASASPRAGLCLHHHRRRRRSSRRTKLAVRAMAPTLSSSSTAAAAPPGLKEGIAGLYDESSGVWESIWGEHMHHGFYDAGEAASMSDHRRAQIRMIEESLAFAAVPDDAEKKPKSVVDVGCGIGGSSRYLANKYGAQCYGITLSPVQAERGNALAAEQGLSDKVSFQVGDALEQPFPDGQFDLVWSMESGEHMPDKRQFVSELARVAAPGARIIIVTWCHRNLEPSEESLKPDELNLLKRICDAYYLPDWCSPSDYVKIAESLSLEDIRTADWSENVAPFWPAVIKSALTWKGLTSLLRSGWKTIRGAMVMPLMIEGYKKGLIKFTIITCRKPETTQ.

The N-terminal 55 residues, 1 to 55 (MAHAAAATGALAPLHPLLRCTSRHLCASASPRAGLCLHHHRRRRRSSRRTKLAVR), are a transit peptide targeting the chloroplast. Residues 141–150 (VVDVGCGIGG) are SAM motif I. The segment at 204 to 212 (GQFDLVWSM) is SAM motif II. Positions 231–240 (VAAPGARIII) are SAM motif III.

This sequence belongs to the class I-like SAM-binding methyltransferase superfamily. gTMT family.

The protein localises to the plastid. It localises to the chloroplast. The enzyme catalyses gamma-tocopherol + S-adenosyl-L-methionine = (+)-alpha-tocopherol + S-adenosyl-L-homocysteine + H(+). It catalyses the reaction delta-tocotrienol + S-adenosyl-L-methionine = beta-tocotrienol + S-adenosyl-L-homocysteine + H(+). It carries out the reaction gamma-tocotrienol + S-adenosyl-L-methionine = alpha-tocotrienol + S-adenosyl-L-homocysteine + H(+). The catalysed reaction is delta-tocopherol + S-adenosyl-L-methionine = beta-tocopherol + S-adenosyl-L-homocysteine + H(+). It participates in cofactor biosynthesis; tocopherol biosynthesis. Its function is as follows. Involved in the synthesis of tocopherol (vitamin E). Methylates gamma- and delta-tocopherol to form beta- and alpha-tocopherol, respectively. In Oryza sativa subsp. japonica (Rice), this protein is Probable tocopherol O-methyltransferase, chloroplastic (VTE4).